The following is a 207-amino-acid chain: tRNA (pseudouridine(54)-N(1))-methyltransferase (207 aa).

Leu137 contributes to the S-adenosyl-L-methionine binding site.

Belongs to the methyltransferase superfamily. TrmY family. In terms of assembly, homodimer.

It is found in the cytoplasm. It catalyses the reaction pseudouridine(54) in tRNA + S-adenosyl-L-methionine = N(1)-methylpseudouridine(54) in tRNA + S-adenosyl-L-homocysteine + H(+). Specifically catalyzes the N1-methylation of pseudouridine at position 54 (Psi54) in tRNAs. This is tRNA (pseudouridine(54)-N(1))-methyltransferase from Halorubrum lacusprofundi (strain ATCC 49239 / DSM 5036 / JCM 8891 / ACAM 34).